The sequence spans 204 residues: Large ribosomal subunit protein uL3 (204 aa).

It belongs to the universal ribosomal protein uL3 family. Part of the 50S ribosomal subunit. Forms a cluster with proteins L14 and L19.

One of the primary rRNA binding proteins, it binds directly near the 3'-end of the 23S rRNA, where it nucleates assembly of the 50S subunit. This is Large ribosomal subunit protein uL3 from Azobacteroides pseudotrichonymphae genomovar. CFP2.